The following is a 235-amino-acid chain: MGHKVNPIGMRLQVNRTWDSRWYADTKDYGNLLLEDLAIREFIKEECKQAGVARVIIERPHKKCRVTIHTARPGVIIGKKGADIETLRKKLANMTDSELHLNIVEVRKPEMDAQLVAESIAQQLERRVSFRRAMKRAVQNSMRMGALGIRVNVAGRLGGAEIARTEWYREGRVPLHTLRADIDYALAEASTPYGIIGIKVWIFKGEILEHDPQARDRKAQELQDGPAPRGAGGRR.

The KH type-2 domain maps to 39–107 (IREFIKEECK…ELHLNIVEVR (69 aa)). A disordered region spans residues 213 to 235 (QARDRKAQELQDGPAPRGAGGRR).

It belongs to the universal ribosomal protein uS3 family. Part of the 30S ribosomal subunit. Forms a tight complex with proteins S10 and S14.

Binds the lower part of the 30S subunit head. Binds mRNA in the 70S ribosome, positioning it for translation. The sequence is that of Small ribosomal subunit protein uS3 from Ruegeria pomeroyi (strain ATCC 700808 / DSM 15171 / DSS-3) (Silicibacter pomeroyi).